We begin with the raw amino-acid sequence, 367 residues long: tRNA-specific 2-thiouridylase MnmA (367 aa).

Residues 14–21 (AMSGGVDS) and Leu40 each bind ATP. Catalysis depends on Cys108, which acts as the Nucleophile. Cysteines 108 and 204 form a disulfide. Gly132 provides a ligand contact to ATP. An interaction with tRNA region spans residues 154-156 (KDQ). Cys204 functions as the Cysteine persulfide intermediate in the catalytic mechanism.

The protein belongs to the MnmA/TRMU family.

Its subcellular location is the cytoplasm. It catalyses the reaction S-sulfanyl-L-cysteinyl-[protein] + uridine(34) in tRNA + AH2 + ATP = 2-thiouridine(34) in tRNA + L-cysteinyl-[protein] + A + AMP + diphosphate + H(+). Functionally, catalyzes the 2-thiolation of uridine at the wobble position (U34) of tRNA, leading to the formation of s(2)U34. This chain is tRNA-specific 2-thiouridylase MnmA, found in Rickettsia bellii (strain OSU 85-389).